A 515-amino-acid polypeptide reads, in one-letter code: Maturase K (515 aa).

It belongs to the intron maturase 2 family. MatK subfamily.

Its subcellular location is the plastid. The protein resides in the chloroplast. Its function is as follows. Usually encoded in the trnK tRNA gene intron. Probably assists in splicing its own and other chloroplast group II introns. In Pseudotsuga menziesii (Douglas-fir), this protein is Maturase K.